An 87-amino-acid chain; its full sequence is Small ribosomal subunit protein bS20 (87 aa).

A disordered region spans residues 1-26; that stretch reads MANIKSAKKRAVQSEKARKHNASRRS.

This sequence belongs to the bacterial ribosomal protein bS20 family.

Binds directly to 16S ribosomal RNA. The chain is Small ribosomal subunit protein bS20 from Klebsiella pneumoniae (strain 342).